We begin with the raw amino-acid sequence, 54 residues long: Snake venom 5'-nucleotidase (54 aa).

The Zn(2+) site is built by Asp11 and His13. N-linked (GlcNAc...) asparagine glycosylation occurs at Asn46.

Belongs to the 5'-nucleotidase family. Requires Zn(2+) as cofactor. Post-translationally, venom 5'-nucleotidases (or a part thereof) may be released into the venom via exosome-like vesicles. They may be attached via a GPI anchor to the membrane of these vesicles. Soluble forms of 5'-nucleotidase might be released by cleavage of the ectodomain in the exosome-like vesicles or venom gland cells. As to expression, expressed by the venom gland.

The protein localises to the membrane. The catalysed reaction is a ribonucleoside 5'-phosphate + H2O = a ribonucleoside + phosphate. In terms of biological role, hydrolyzes nucleotides into nucleosides. Snake venom 5'-nucleotidases are widely distributed among venomous snake taxa, but there is a lack of information about their biological activities. They have been shown to inhibit platelet aggregation. This effect may be due to the liberation of inhibitory AMP or adenosine by its action on ADP released upon initiation of aggregation. Venom 5'-nucleotidases are also known to synergistically act in vivo with other toxins like ADPases, phospholipases, and disintegrins to exert a more pronounced anti-coagulant effect. The sequence is that of Snake venom 5'-nucleotidase from Gloydius blomhoffii blomhoffii (Japanese mamushi).